Here is a 263-residue protein sequence, read N- to C-terminus: uncharacterized protein (263 aa).

This is an uncharacterized protein from Mycobacterium tuberculosis (strain CDC 1551 / Oshkosh).